Reading from the N-terminus, the 259-residue chain is Ditrans,polycis-undecaprenyl-diphosphate synthase ((2E,6E)-farnesyl-diphosphate specific) (259 aa).

The active site involves aspartate 32. A Mg(2+)-binding site is contributed by aspartate 32. Substrate is bound by residues glycine 33–arginine 36, tryptophan 37, arginine 45, histidine 49, and serine 77–glutamate 79. Residue asparagine 80 is the Proton acceptor of the active site. Substrate-binding positions include tryptophan 81, arginine 83, arginine 203, and arginine 209–serine 211. Glutamate 222 lines the Mg(2+) pocket.

It belongs to the UPP synthase family. Homodimer. Mg(2+) is required as a cofactor.

It catalyses the reaction 8 isopentenyl diphosphate + (2E,6E)-farnesyl diphosphate = di-trans,octa-cis-undecaprenyl diphosphate + 8 diphosphate. Its function is as follows. Catalyzes the sequential condensation of isopentenyl diphosphate (IPP) with (2E,6E)-farnesyl diphosphate (E,E-FPP) to yield (2Z,6Z,10Z,14Z,18Z,22Z,26Z,30Z,34E,38E)-undecaprenyl diphosphate (di-trans,octa-cis-UPP). UPP is the precursor of glycosyl carrier lipid in the biosynthesis of bacterial cell wall polysaccharide components such as peptidoglycan and lipopolysaccharide. This is Ditrans,polycis-undecaprenyl-diphosphate synthase ((2E,6E)-farnesyl-diphosphate specific) (uppS) from Lactiplantibacillus plantarum (strain ATCC BAA-793 / NCIMB 8826 / WCFS1) (Lactobacillus plantarum).